Here is a 1432-residue protein sequence, read N- to C-terminus: ABC transporter B family member 3 (1432 aa).

Disordered regions lie at residues 1–21 (MDDGNENNENAQHDEYDEEEI) and 48–149 (ITQP…KTEE). 3 stretches are compositionally biased toward low complexity: residues 52–62 (SNNNNNSNNNN), 76–106 (NNNNNNNNNNNNNNNNNNNNNNNSNNSFNNN), and 118–135 (NTNENNNKNNNNNNNNND). Positions 117–163 (ENTNENNNKNNNNNNNNNDDYNDGADERVKTEEEIKKEAENELNQSV) form a coiled coil. An ABC transmembrane type-1 1 domain is found at 180 to 479 (MFLGTIAAVI…ASPCLALFAQ (300 aa)). The next 6 membrane-spanning stretches (helical) occupy residues 185–205 (IAAVINGAAMPTVSLVFGLVV), 232–252 (LLMLGGGVFVLSYLETTLWMI), 303–323 (KVGRFIHFFSTFVAGFVIGFT), 325–345 (GWQLTLVITSVSPLLAIGGFF), 410–430 (GLGLGFVQFVILGTYALAFWY), and 457–477 (FFAVIIGATSIGQASPCLALF). An ABC transporter 1 domain is found at 514-750 (IEFKDVGFHY…QGLYFDLVEK (237 aa)). Residue 549–556 (GDSGGGKS) participates in ATP binding. The segment at 787–819 (KRSLRKNESESNKKDKEDSNNKKKKKSNKKKVE) is disordered. The span at 791 to 807 (RKNESESNKKDKEDSNN) shows a compositional bias: basic and acidic residues. The region spanning 837 to 1157 (WCFGFLSAVG…ASSFAPDLAK (321 aa)) is the ABC transmembrane type-1 2 domain. The next 6 membrane-spanning stretches (helical) occupy residues 838-858 (CFGFLSAVGTGAVYPGFAMVF), 882-902 (LMFVALAVGAGISNFFQGFLF), 968-988 (MVGGLVIAFYSGWQLTLVIIA), 989-1009 (CFPLVVITSKVQMQILAGFSS), 1060-1080 (ISGFAFGFTQLILFCVYCLSF), and 1134-1154 (VFFAIVMSAIGVGQASSFAPD). Positions 1192-1428 (IEFKNLHFSY…EGPYSQLWYN (237 aa)) constitute an ABC transporter 2 domain. 1227 to 1234 (GDSGGGKS) contributes to the ATP binding site.

It belongs to the ABC transporter superfamily. ABCB family. Multidrug resistance exporter (TC 3.A.1.201) subfamily.

The protein resides in the membrane. The chain is ABC transporter B family member 3 (abcB3) from Dictyostelium discoideum (Social amoeba).